The primary structure comprises 384 residues: H-2 class I histocompatibility antigen, TLA(B) alpha chain (384 aa).

The signal sequence occupies residues 1–26 (MRMGTPVPGTLLILLAASQGQTQTCP). Positions 27–116 (GSHSLRYFYT…MLDYYNLSQN (90 aa)) are alpha-1. Over 27–314 (GSHSLRYFYT…TSMPNRTTVR (288 aa)) the chain is Extracellular. Residues Asn63, Asn112, and Asn116 are each glycosylated (N-linked (GlcNAc...) asparagine). The interval 117 to 208 (GSHTIQVMYG…ENRKKTQECT (92 aa)) is alpha-2. Disulfide bonds link Cys127–Cys190 and Cys229–Cys285. An alpha-3 region spans residues 209–300 (DPPKTHVTHH…GLPEPLTLRW (92 aa)). The Ig-like C1-type domain maps to 211 to 299 (PKTHVTHHPR…EGLPEPLTLR (89 aa)). Residues 301-314 (EPPQTSMPNRTTVR) form a connecting peptide region. An N-linked (GlcNAc...) asparagine glycan is attached at Asn309. The helical transmembrane segment at 315 to 334 (ALLGAMIILGFMSGSVMMWM) threads the bilayer. At 335-384 (RKNNGGNGDDNTAAYQNEREHLSLDPRAESEALGVEAGMKDLPSAPPLVS) the chain is on the cytoplasmic side. A compositionally biased stretch (basic and acidic residues) spans 354–364 (EHLSLDPRAES). The segment at 354–384 (EHLSLDPRAESEALGVEAGMKDLPSAPPLVS) is disordered.

The protein belongs to the MHC class I family. In terms of assembly, heterodimer of an alpha chain and a beta chain (beta-2-microglobulin). As to expression, TL antigens are only expressed on thymocytes, activated T-lymphocytes and on some thymic leukemias.

It is found in the membrane. In terms of biological role, involved in the presentation of foreign antigens to the immune system. This Mus musculus (Mouse) protein is H-2 class I histocompatibility antigen, TLA(B) alpha chain (H2-T3).